The sequence spans 299 residues: Urease accessory protein UreD (299 aa).

It belongs to the UreD family. UreD, UreF and UreG form a complex that acts as a GTP-hydrolysis-dependent molecular chaperone, activating the urease apoprotein by helping to assemble the nickel containing metallocenter of UreC. The UreE protein probably delivers the nickel.

The protein resides in the cytoplasm. In terms of biological role, required for maturation of urease via the functional incorporation of the urease nickel metallocenter. This chain is Urease accessory protein UreD, found in Haloarcula marismortui (strain ATCC 43049 / DSM 3752 / JCM 8966 / VKM B-1809) (Halobacterium marismortui).